The primary structure comprises 154 residues: Egg-lysin (154 aa).

A signal peptide spans 1–18 (MKLLVLCIFAMMATLAMS).

As to quaternary structure, homodimer. Sperm.

In terms of biological role, dissolves the egg vitelline layer nonenzymatically during fertilization. It creates a hole of about 3 mu-m in diameter through which the sperm pass. In Haliotis sorenseni (White abalone), this protein is Egg-lysin.